Here is a 166-residue protein sequence, read N- to C-terminus: Testis-expressed protein 51 (166 aa).

A signal peptide spans 1–15; that stretch reads MLPLLIICLLPAIEG. Residues 138-154 traverse the membrane as a helical segment; the sequence is SLWAVSLSSALLLAIAG.

It localises to the membrane. The chain is Testis-expressed protein 51 from Homo sapiens (Human).